The sequence spans 145 residues: Large ribosomal subunit protein bL19 (145 aa).

The protein belongs to the bacterial ribosomal protein bL19 family.

Its function is as follows. This protein is located at the 30S-50S ribosomal subunit interface and may play a role in the structure and function of the aminoacyl-tRNA binding site. The protein is Large ribosomal subunit protein bL19 of Brucella anthropi (strain ATCC 49188 / DSM 6882 / CCUG 24695 / JCM 21032 / LMG 3331 / NBRC 15819 / NCTC 12168 / Alc 37) (Ochrobactrum anthropi).